Reading from the N-terminus, the 471-residue chain is MSFIHDDFLLDTQQAKVLYHEYAKNMPIIDYHCHLPPEQVGQNKQFRNLYEVWLAGDHYKWRAMRSNGVDERYCTGNASDWEKFEKWCETVPYTLRNPLYHWTHLELRKPFGITDRLLDSRSAKRTWDECNELLATPEFSARGLMTQANVKLVCTTDDPIHDLAHHKTVAADKSFKTAMLPTWRPDRAMMVEDAESYNKYLDRLAITADININTFDDLIKALQIRHDYFHENGCRLSDHGLETVYAADYTDSEIKAIFLKIRAHKQLDAVEIEKFQSAMMVEFALQDHAKGWVQQFHIGAIRNNNPRLFRTLGPDTGFDSIGDHNYAKPLAKFLGRLDDQNKLAKTILYNLNPRDNEMIGTMIGNFQDGSAAGKIQFGSGWWFLDQMEGMTRQIEALSQLGLLSRFVGMLTDSRSFLSYSRHEYFRRILCGIFGRDMVKGLVPDDTHMVGKMIQDISFNNAKNYFPFVVPE.

This sequence belongs to the metallo-dependent hydrolases superfamily. Uronate isomerase family.

It catalyses the reaction D-glucuronate = D-fructuronate. The catalysed reaction is aldehydo-D-galacturonate = keto-D-tagaturonate. Its pathway is carbohydrate metabolism; pentose and glucuronate interconversion. This Cellvibrio japonicus (strain Ueda107) (Pseudomonas fluorescens subsp. cellulosa) protein is Uronate isomerase.